The following is a 189-amino-acid chain: Anthranilate synthase component 2 (189 aa).

The Glutamine amidotransferase type-1 domain occupies 1-189; it reads MILIIDNYDS…QLLKNFLDSD (189 aa). 52–54 serves as a coordination point for L-glutamine; it reads GPG. Cys79 serves as the catalytic Nucleophile; for GATase activity. L-glutamine is bound by residues Gln83 and 129-130; that span reads SL. Catalysis depends on residues His169 and Glu171.

Tetramer of two components I and two components II.

It is found in the plastid. The protein resides in the chloroplast. The enzyme catalyses chorismate + L-glutamine = anthranilate + pyruvate + L-glutamate + H(+). Its pathway is amino-acid biosynthesis; L-tryptophan biosynthesis; L-tryptophan from chorismate: step 1/5. The chain is Anthranilate synthase component 2 (trpG) from Porphyra purpurea (Red seaweed).